The primary structure comprises 522 residues: 2-isopropylmalate synthase (522 aa).

The Pyruvate carboxyltransferase domain occupies Val5–His267. Positions 14, 202, 204, and 238 each coordinate Mn(2+). Residues Gln392–Val522 form a regulatory domain region.

It belongs to the alpha-IPM synthase/homocitrate synthase family. LeuA type 1 subfamily. As to quaternary structure, homodimer. Mn(2+) is required as a cofactor.

Its subcellular location is the cytoplasm. It catalyses the reaction 3-methyl-2-oxobutanoate + acetyl-CoA + H2O = (2S)-2-isopropylmalate + CoA + H(+). It functions in the pathway amino-acid biosynthesis; L-leucine biosynthesis; L-leucine from 3-methyl-2-oxobutanoate: step 1/4. Catalyzes the condensation of the acetyl group of acetyl-CoA with 3-methyl-2-oxobutanoate (2-ketoisovalerate) to form 3-carboxy-3-hydroxy-4-methylpentanoate (2-isopropylmalate). The polypeptide is 2-isopropylmalate synthase (Shewanella oneidensis (strain ATCC 700550 / JCM 31522 / CIP 106686 / LMG 19005 / NCIMB 14063 / MR-1)).